We begin with the raw amino-acid sequence, 772 residues long: Uracil catabolism protein 2 (772 aa).

A disordered region spans residues 1–70 (MDINSNASVS…KKPRKKRKTF (70 aa)). Residues 39–51 (HPEDSARAKERSE) are compositionally biased toward basic and acidic residues. The span at 59-69 (GNKKPRKKRKT) shows a compositional bias: basic residues. Residues 72 to 101 (CDTCRRVKTRCDFEPFIGKCYRCNVLQLDC) constitute a DNA-binding region (zn(2)-C6 fungal-type).

This sequence belongs to the URC2 family.

It localises to the cytoplasm. The protein resides in the nucleus. In terms of biological role, probable transcriptional activator involved in uracil catabolism. In Saccharomyces cerevisiae (strain ATCC 204508 / S288c) (Baker's yeast), this protein is Uracil catabolism protein 2 (URC2).